Here is a 223-residue protein sequence, read N- to C-terminus: Thiamine-phosphate synthase (223 aa).

4-amino-2-methyl-5-(diphosphooxymethyl)pyrimidine contacts are provided by residues 45 to 49 and Asn77; that span reads QYREK. Mg(2+) is bound by residues Asp78 and Asp97. Residue Thr116 coordinates 4-amino-2-methyl-5-(diphosphooxymethyl)pyrimidine. 142–144 is a binding site for 2-[(2R,5Z)-2-carboxy-4-methylthiazol-5(2H)-ylidene]ethyl phosphate; it reads SYT. Residue Lys145 participates in 4-amino-2-methyl-5-(diphosphooxymethyl)pyrimidine binding. 2-[(2R,5Z)-2-carboxy-4-methylthiazol-5(2H)-ylidene]ethyl phosphate-binding positions include Gly173 and 193-194; that span reads VT.

The protein belongs to the thiamine-phosphate synthase family. Requires Mg(2+) as cofactor.

It catalyses the reaction 2-[(2R,5Z)-2-carboxy-4-methylthiazol-5(2H)-ylidene]ethyl phosphate + 4-amino-2-methyl-5-(diphosphooxymethyl)pyrimidine + 2 H(+) = thiamine phosphate + CO2 + diphosphate. It carries out the reaction 2-(2-carboxy-4-methylthiazol-5-yl)ethyl phosphate + 4-amino-2-methyl-5-(diphosphooxymethyl)pyrimidine + 2 H(+) = thiamine phosphate + CO2 + diphosphate. The enzyme catalyses 4-methyl-5-(2-phosphooxyethyl)-thiazole + 4-amino-2-methyl-5-(diphosphooxymethyl)pyrimidine + H(+) = thiamine phosphate + diphosphate. It participates in cofactor biosynthesis; thiamine diphosphate biosynthesis; thiamine phosphate from 4-amino-2-methyl-5-diphosphomethylpyrimidine and 4-methyl-5-(2-phosphoethyl)-thiazole: step 1/1. In terms of biological role, condenses 4-methyl-5-(beta-hydroxyethyl)thiazole monophosphate (THZ-P) and 2-methyl-4-amino-5-hydroxymethyl pyrimidine pyrophosphate (HMP-PP) to form thiamine monophosphate (TMP). This Dictyoglomus thermophilum (strain ATCC 35947 / DSM 3960 / H-6-12) protein is Thiamine-phosphate synthase.